The chain runs to 376 residues: Thymidine kinase (376 aa).

The tract at residues 1–47 (MASHAGQQHAPAFGQAARASGPTDGRAASRPSHRQGASEARGDPELP) is disordered. An ATP-binding site is contributed by 56–63 (GPHGVGKT). Glu-84 (proton acceptor) is an active-site residue. 2 residues coordinate substrate: Tyr-102 and Gln-126. Residue Arg-217 coordinates ATP. Arg-223 provides a ligand contact to substrate.

This sequence belongs to the herpesviridae thymidine kinase family. As to quaternary structure, homodimer.

The enzyme catalyses thymidine + ATP = dTMP + ADP + H(+). In terms of biological role, catalyzes the transfer of the gamma-phospho group of ATP to thymidine to generate dTMP in the salvage pathway of pyrimidine synthesis. The dTMP serves as a substrate for DNA polymerase during viral DNA replication. Allows the virus to be reactivated and to grow in non-proliferative cells lacking a high concentration of phosphorylated nucleic acid precursors. This chain is Thymidine kinase, found in Human herpesvirus 2 (strain 333) (HHV-2).